A 133-amino-acid polypeptide reads, in one-letter code: Small ribosomal subunit protein uS8 (133 aa).

It belongs to the universal ribosomal protein uS8 family. Part of the 30S ribosomal subunit. Contacts proteins S5 and S12.

In terms of biological role, one of the primary rRNA binding proteins, it binds directly to 16S rRNA central domain where it helps coordinate assembly of the platform of the 30S subunit. This is Small ribosomal subunit protein uS8 from Crocosphaera subtropica (strain ATCC 51142 / BH68) (Cyanothece sp. (strain ATCC 51142)).